The sequence spans 188 residues: Elongation factor P (188 aa).

Belongs to the elongation factor P family.

The protein resides in the cytoplasm. Its pathway is protein biosynthesis; polypeptide chain elongation. In terms of biological role, involved in peptide bond synthesis. Stimulates efficient translation and peptide-bond synthesis on native or reconstituted 70S ribosomes in vitro. Probably functions indirectly by altering the affinity of the ribosome for aminoacyl-tRNA, thus increasing their reactivity as acceptors for peptidyl transferase. The polypeptide is Elongation factor P (Nitrobacter winogradskyi (strain ATCC 25391 / DSM 10237 / CIP 104748 / NCIMB 11846 / Nb-255)).